The sequence spans 214 residues: Probable transaldolase (214 aa).

Catalysis depends on Lys-83, which acts as the Schiff-base intermediate with substrate.

The protein belongs to the transaldolase family. Type 3B subfamily.

Its subcellular location is the cytoplasm. It catalyses the reaction D-sedoheptulose 7-phosphate + D-glyceraldehyde 3-phosphate = D-erythrose 4-phosphate + beta-D-fructose 6-phosphate. Its pathway is carbohydrate degradation; pentose phosphate pathway; D-glyceraldehyde 3-phosphate and beta-D-fructose 6-phosphate from D-ribose 5-phosphate and D-xylulose 5-phosphate (non-oxidative stage): step 2/3. In terms of biological role, transaldolase is important for the balance of metabolites in the pentose-phosphate pathway. The sequence is that of Probable transaldolase from Alkaliphilus metalliredigens (strain QYMF).